The following is a 67-amino-acid chain: Ceratotoxin-C (67 aa).

An N-terminal signal peptide occupies residues 1–23 (MANIKAVFLICIVAFIAFHCVVA). The propeptide occupies 24–35 (EPTAEDSVVVKR).

As to quaternary structure, homomer of four to six subunits.

It is found in the secreted. Its function is as follows. Female-specific peptides with potent activity against Gram-positive and Gram-negative bacteria. They have as well hemolytic activity. This Ceratitis capitata (Mediterranean fruit fly) protein is Ceratotoxin-C (CTXC1).